A 374-amino-acid polypeptide reads, in one-letter code: Negative elongation factor E (374 aa).

A coiled-coil region spans residues 7-36 (GLSEEEEALQKKFNKLKKKKKALLALKKQS). A compositionally biased stretch (low complexity) spans 30–43 (LALKKQSSSSTASQ). The interval 30-58 (LALKKQSSSSTASQGGVKRSLSEQPVVDT) is disordered. Serine 51 bears the Phosphoserine mark. Residue lysine 78 forms a Glycyl lysine isopeptide (Lys-Gly) (interchain with G-Cter in SUMO1); alternate linkage. Lysine 78 participates in a covalent cross-link: Glycyl lysine isopeptide (Lys-Gly) (interchain with G-Cter in SUMO2); alternate. Residues 79–252 (AETKNSGFKR…SDSFPERRAP (174 aa)) form a disordered region. A Glycyl lysine isopeptide (Lys-Gly) (interchain with G-Cter in SUMO2) cross-link involves residue lysine 82. Over residues 90–101 (RTLEGKLKDPEK) the composition is skewed to basic and acidic residues. Phosphoserine occurs at positions 113 and 115. Glutamate 122 is subject to PolyADP-ribosyl glutamic acid. Phosphoserine is present on residues serine 131 and serine 139. Residue glutamate 151 is modified to PolyADP-ribosyl glutamic acid. The residue at position 165 (serine 165) is a Phosphoserine. Glutamate 172 bears the PolyADP-ribosyl glutamic acid mark. A phosphoserine mark is found at serine 179, serine 181, serine 185, and serine 187. Repeat copies occupy residues 184-185 (RS), 186-187 (RS), 188-189 (RD), 190-191 (RS), 192-193 (RE), 194-195 (RN), 196-197 (RD), 198-199 (RD), 200-201 (RD), 202-203 (RD), 204-205 (RE), 206-207 (RD), 208-209 (RE), 210-211 (RD), 212-213 (RD), 214-215 (RD), 216-217 (RD), 218-219 (RE), 220-221 (RD), 222-223 (RD), 224-225 (RD), 226-227 (RD), 228-229 (RD), 230-231 (RD), 232-233 (RE), 234-235 (RD), and 236-237 (RE). The segment at 184-237 (RSRSRDRSRERNRDRDRDRDRERDRERDRDRDRDRERDRDRDRDRDRDRERDRE) is 27 X 2 AA approximate tandem repeats of R-[DSNE]. Residues 186–250 (RSRDRSRERN…RRSDSFPERR (65 aa)) show a composition bias toward basic and acidic residues. Serine 191 bears the Phosphoserine mark. Phosphoserine occurs at positions 243 and 245. The RRM domain maps to 256 to 326 (NTLYVYGEDM…VQLKVSIARK (71 aa)). A phosphothreonine mark is found at threonine 266 and threonine 268. 2 positions are modified to phosphoserine: serine 275 and serine 347. Glutamate 368 carries the post-translational modification PolyADP-ribosyl glutamic acid.

The protein belongs to the RRM NELF-E family. In terms of assembly, the NELF complex is composed of NELFA, NELFB, NELFCD and NELFE. Interacts with NELFB. Post-translationally, phosphorylated by the P-TEFb complex at sites next to its RNA recognition motif, promoting its release from chromatin. Sumoylated. In terms of processing, poly-ADP-ribosylated by PARP1, thereby preventing RNA-binding and relieving transcription pausing.

The protein resides in the nucleus. It is found in the chromosome. Its function is as follows. Essential component of the NELF complex, a complex that negatively regulates the elongation of transcription by RNA polymerase II. The NELF complex, which acts via an association with the DSIF complex and causes transcriptional pausing, is counteracted by the P-TEFb kinase complex. Provides the strongest RNA binding activity of the NELF complex and may initially recruit the NELF complex to RNA. The chain is Negative elongation factor E (NELFE) from Bos taurus (Bovine).